The following is an 87-amino-acid chain: U3-theraphotoxin-Hhn1d (87 aa).

A signal peptide spans 1-24 (MVNMKASMFLTFAGLVLLFVVCYA). A propeptide spanning residues 25–52 (SESEEKEFPKEMLSSIFAVDNDFKQEER) is cleaved from the precursor. 3 cysteine pairs are disulfide-bonded: cysteine 54/cysteine 67, cysteine 61/cysteine 72, and cysteine 66/cysteine 79.

Belongs to the neurotoxin 10 (Hwtx-1) family. 51 (Hntx-8) subfamily. Hntx-8 sub-subfamily. Expressed by the venom gland.

Its subcellular location is the secreted. Ion channel inhibitor. The chain is U3-theraphotoxin-Hhn1d from Cyriopagopus hainanus (Chinese bird spider).